A 372-amino-acid chain; its full sequence is Neuropeptide S receptor (372 aa).

Topologically, residues 1 to 52 (MPANLTEGSFHANQTVPMLDSSPVACTEIVTFTEALEAEEWGSFYSSFKTEQ) are extracellular. 2 N-linked (GlcNAc...) asparagine glycosylation sites follow: Asn-4 and Asn-13. Residues 53-73 (LITLWVLFVFTIVGNSVVLFS) traverse the membrane as a helical segment. The Cytoplasmic portion of the chain corresponds to 74–82 (TWRRKRKSR). A helical membrane pass occupies residues 83–103 (MTFFVTQLAITDSFTGLINIL). At 104–122 (TDIIWRFTGDFMAPDLVCR) the chain is on the extracellular side. The cysteines at positions 121 and 198 are disulfide-linked. A helical transmembrane segment spans residues 123-143 (IVRYLQVVLLYASTYVLVSLS). The Cytoplasmic segment spans residues 144–165 (IDRYHAIVYPMKFLQGAEKQAK). The helical transmembrane segment at 166-186 (VLIGIAWSLSFLFSIPTLIIF) threads the bilayer. Topologically, residues 187–213 (GKRTLSNGEVQCWALWPDDSYWTPYMT) are extracellular. A helical membrane pass occupies residues 214-234 (IVAFLVYFIPLTIISVIYGLV). The Cytoplasmic segment spans residues 235-276 (IRTIWIKSKAHETVISNCSDGELCCSYNRGLISKAKIKAIKY). The chain crosses the membrane as a helical span at residues 277-297 (SIVIILAFICCWSPYFLFDML). At 298–313 (DNFNLLPDTKERFYAS) the chain is on the extracellular side. A helical transmembrane segment spans residues 314–334 (VIIQNLPALNSAINPLIYCIF). Topologically, residues 335 to 372 (SGSLCSPCKVQRSQDSRMTYRERSERHEMQILSKPEFI) are cytoplasmic.

This sequence belongs to the G-protein coupled receptor 1 family. Vasopressin/oxytocin receptor subfamily.

The protein resides in the cell membrane. Functionally, G-protein coupled receptor for neuropeptide S (NPS). Promotes mobilization of intracellular Ca(2+) stores. Inhibits cell growth in response to NPS binding. Involved in pathogenesis of asthma and other IgE-mediated diseases. The sequence is that of Neuropeptide S receptor (Npsr1) from Rattus norvegicus (Rat).